Reading from the N-terminus, the 1317-residue chain is Putative late blight resistance protein homolog R1B-14 (1317 aa).

Coiled-coil stretches lie at residues 419 to 442 and 535 to 556; these read RYSD…ESLQ and RMNE…RLLN. The NB-ARC domain occupies 521 to 823; it reads TVITHTSSQL…SESFIKSSEG (303 aa). Residue 568–575 coordinates ATP; sequence GMPGLGKT. LRR repeat units follow at residues 944-968, 987-1015, 1090-1114, 1138-1161, 1164-1186, and 1187-1211; these read FKFL…LFYL, LWNL…IWDM, PIRL…ISAP, LKHL…KVSN, FPQL…ADDA, and FPNL…FMDI. One can recognise an HMA domain in the interval 1251–1317; it reads IKKMVLKFDI…VSKLRKRGML (67 aa).

This sequence belongs to the disease resistance NB-LRR family.

The protein localises to the cytoplasm. It localises to the membrane. Confers resistance to late blight (Phytophthora infestans) races carrying the avirulence gene Avr1. Resistance proteins guard the plant against pathogens that contain an appropriate avirulence protein via an indirect interaction with this avirulence protein. That triggers a defense system including the hypersensitive response, which restricts the pathogen growth. In Solanum demissum (Wild potato), this protein is Putative late blight resistance protein homolog R1B-14 (R1B-14).